The primary structure comprises 120 residues: Proteinase inhibitor (120 aa).

The signal sequence occupies residues 1–19; that stretch reads MKQLIIATLLSALSGGCMA. Cysteine 43 and cysteine 65 form a disulfide bridge.

The protein belongs to the protease inhibitor I38 family. Monomer.

It is found in the periplasm. In terms of biological role, inhibitor of the extracellular proteases A, B, and C of E.chrysanthemi and the S.marcescens 50 kDa extracellular protease. It forms a non-covalent bond with the proteases and may prevent autocatalytic cleavage of the proteases zymogen in the periplasm. This chain is Proteinase inhibitor (inh), found in Dickeya chrysanthemi (Pectobacterium chrysanthemi).